The chain runs to 67 residues: DNA-directed RNA polymerase subunit omega (67 aa).

The protein belongs to the RNA polymerase subunit omega family. The RNAP catalytic core consists of 2 alpha, 1 beta, 1 beta' and 1 omega subunit. When a sigma factor is associated with the core the holoenzyme is formed, which can initiate transcription.

The catalysed reaction is RNA(n) + a ribonucleoside 5'-triphosphate = RNA(n+1) + diphosphate. Promotes RNA polymerase assembly. Latches the N- and C-terminal regions of the beta' subunit thereby facilitating its interaction with the beta and alpha subunits. This is DNA-directed RNA polymerase subunit omega from Burkholderia ambifaria (strain ATCC BAA-244 / DSM 16087 / CCUG 44356 / LMG 19182 / AMMD) (Burkholderia cepacia (strain AMMD)).